Consider the following 210-residue polypeptide: MAEGSRLYFAVTVLMCAFVSINGVGLNDLLERASQLSDKLHSLSTSLTNDLDSHFPPVGRVMMPRPSMCHTSSLQIPNDKDQALKVPEDELLSLARSLLLAWSDPLALLSSEASSLAHPERNTINSKTKELQDNINSLGAGLERVVHKMGSSSDNLSSLPFYSNSLGQDKTSRLVNFHFLLSCFRRDSHKIDSFLKVLRCRAAKKRPEMC.

The first 23 residues, 1 to 23 (MAEGSRLYFAVTVLMCAFVSING), serve as a signal peptide directing secretion. Cystine bridges form between Cys69–Cys183 and Cys200–Cys210.

The protein belongs to the somatotropin/prolactin family. In terms of tissue distribution, pituitary gland.

The protein localises to the secreted. This is Prolactin (prl) from Hypophthalmichthys nobilis (Bighead carp).